A 22-amino-acid chain; its full sequence is Zinc metalloproteinase oxiagin (22 aa).

The Peptidase M12B domain occupies cysteine 14 to valine 22.

It belongs to the venom metalloproteinase (M12B) family. P-III subfamily. P-IIId sub-subfamily. Heterotrimer; disulfide-linked. The heterotrimer consists of 1 metalloproteinase chain and 2 lectin chains. Zn(2+) is required as a cofactor. N-glycosylated. Expressed by the venom gland.

It localises to the secreted. Functionally, snake venom metalloproteinase that inhibits the classical complement pathway dose-dependently. It acts by binding to carbohydrates of IgG within the antibody-sensitized sheep erythrocytes (EA) complex, and thus prevents interaction of component C2 with immobilized C4b. Also induces cation-independent hemagglutination that can be prevented by D-galactose pretreatment. In Naja oxiana (Central Asian cobra), this protein is Zinc metalloproteinase oxiagin.